The following is a 266-amino-acid chain: Glutaconate CoA-transferase subunit B (266 aa).

Residue glutamate 54 is part of the active site.

This sequence belongs to the 3-oxoacid CoA-transferase subunit B family. In terms of assembly, heterooctamer of four A and four B subunits.

The protein resides in the cytoplasm. The enzyme catalyses trans-glutaconate + acetyl-CoA = (2E)-glutaconyl-CoA + acetate. The protein operates within amino-acid degradation; L-glutamate degradation via hydroxyglutarate pathway; crotonoyl-CoA from L-glutamate: step 3/5. Functionally, catalyzes the transfer of the CoA moiety from acetyl-CoA to (R)-2-hydroxyglutarate and related compounds like glutaconate. This chain is Glutaconate CoA-transferase subunit B (gctB), found in Acidaminococcus fermentans (strain ATCC 25085 / DSM 20731 / CCUG 9996 / CIP 106432 / VR4).